The sequence spans 207 residues: Small ribosomal subunit protein uS4 (207 aa).

The interval 31–54 is disordered; sequence KCKLDTKPGQHGRTSGSRTSDYGN. Polar residues predominate over residues 42 to 53; that stretch reads GRTSGSRTSDYG. In terms of domain architecture, S4 RNA-binding spans 97-158; the sequence is SRLDNVVYRM…KAKKQARITE (62 aa).

The protein belongs to the universal ribosomal protein uS4 family. Part of the 30S ribosomal subunit. Contacts protein S5. The interaction surface between S4 and S5 is involved in control of translational fidelity.

Functionally, one of the primary rRNA binding proteins, it binds directly to 16S rRNA where it nucleates assembly of the body of the 30S subunit. Its function is as follows. With S5 and S12 plays an important role in translational accuracy. The protein is Small ribosomal subunit protein uS4 of Polynucleobacter asymbioticus (strain DSM 18221 / CIP 109841 / QLW-P1DMWA-1) (Polynucleobacter necessarius subsp. asymbioticus).